A 239-amino-acid chain; its full sequence is Orotidine 5'-phosphate decarboxylase (239 aa).

Substrate contacts are provided by residues D10, K32, 59 to 68, T122, R184, Q193, G213, and R214; that span reads DLKLHDIPNT. The active-site Proton donor is the K61.

This sequence belongs to the OMP decarboxylase family. Type 1 subfamily. In terms of assembly, homodimer.

The catalysed reaction is orotidine 5'-phosphate + H(+) = UMP + CO2. It participates in pyrimidine metabolism; UMP biosynthesis via de novo pathway; UMP from orotate: step 2/2. Functionally, catalyzes the decarboxylation of orotidine 5'-monophosphate (OMP) to uridine 5'-monophosphate (UMP). The protein is Orotidine 5'-phosphate decarboxylase of Geobacillus sp. (strain WCH70).